A 1313-amino-acid polypeptide reads, in one-letter code: Ataxin-2 (1313 aa).

Over residues 1 to 12 (MRSAAAAPRSPA) the composition is skewed to low complexity. Positions 1-255 (MRSAAAAPRS…RNSNKGLPQS (255 aa)) are disordered. A compositionally biased stretch (pro residues) spans 48–65 (GPYPSAAPPPPGPGPPPS). 4 stretches are compositionally biased toward low complexity: residues 104-114 (FVVLLLPLASP), 141-154 (ARPA…ACEP), 166-187 (QQQQ…QQQQ), and 204-234 (LLAS…VAAT). The segment covering 235-244 (SGGGRPGLGR) has biased composition (gly residues). The residue at position 248 (Ser248) is a Phosphoserine. One can recognise a Sm domain in the interval 267 to 344 (RMVHILTSVV…FVVVQFKDMD (78 aa)). Ser393, Ser466, Ser478, Ser508, and Ser554 each carry phosphoserine. 2 stretches are compositionally biased toward basic and acidic residues: residues 459-471 (ALEN…EEKY) and 478-492 (SSER…RENK). Disordered stretches follow at residues 459-954 (ALEN…HQQP) and 1137-1219 (NATL…NSFP). The segment covering 508–544 (SGRQNSPRMGQPGSGSMPSRSTSHTSDFNPNSGSDQR) has biased composition (polar residues). Positions 552–562 (WPSPCPSPSSR) are enriched in pro residues. Residues 563–581 (PPSRYQSGPNSLPPRAATP) are compositionally biased toward low complexity. A compositionally biased stretch (pro residues) spans 582–598 (TRPPSRPPSRPSRPPSH). Position 624 is a phosphoserine (Ser624). Residues 627–637 (AQRHPRNHRVS) show a composition bias toward basic residues. Asymmetric dimethylarginine; alternate is present on Arg640. Arg640 is modified (omega-N-methylarginine; alternate). The residue at position 642 (Ser642) is a Phosphoserine. Residues 666-681 (TSPSGGTWSSVVSGVP) are compositionally biased toward low complexity. Ser684 carries the phosphoserine modification. Over residues 693-703 (PRQNSIGNTPS) the composition is skewed to polar residues. Ser728 is modified (phosphoserine). Thr741 carries the post-translational modification Phosphothreonine. A compositionally biased stretch (polar residues) spans 768–777 (PNETSPSFSK). 2 positions are modified to phosphoserine: Ser772 and Ser784. The segment covering 788–804 (SEHRKQIDDLKKFKNDF) has biased composition (basic and acidic residues). Residues 807-820 (QPSSTSESMDQLLN) show a composition bias toward polar residues. Over residues 821 to 844 (KNREGEKSRDLIKDKIEPSAKDSF) the composition is skewed to basic and acidic residues. Positions 847–871 (NSSSNCTSGSSKPNSPSISPSILSN) are enriched in low complexity. Residues Ser856, Ser857, Ser861, Ser865, Ser867, Ser888, and Ser889 each carry the phosphoserine modification. The span at 880–891 (VTSQGVQTSSPA) shows a compositional bias: polar residues. Lys893 participates in a covalent cross-link: Glycyl lysine isopeptide (Lys-Gly) (interchain with G-Cter in SUMO2). Over residues 893-910 (KQEKDDKEEKKDAAEQVR) the composition is skewed to basic and acidic residues. Low complexity-rich tracts occupy residues 925–936 (SFSQPKPSTTPT) and 1155–1192 (GQQQ…QQSA). Polar residues predominate over residues 1206 to 1219 (TPASNTQSPQNSFP).

The protein belongs to the ataxin-2 family. In terms of assembly, monomer. Can also form homodimers. Interacts with TARDBP; the interaction is RNA-dependent. Interacts with RBFOX1. Interacts with polyribosomes. Interacts with SH3GL2 and SH3GL3. Interacts with SH3KBP1 and CBL. Interacts with EGFR. Interacts with ATXN2L. In terms of tissue distribution, expressed in the brain, heart, liver, skeletal muscle, pancreas and placenta. Isoform 1 is predominant in the brain and spinal cord. Isoform 4 is more abundant in the cerebellum. In the brain, broadly expressed in the amygdala, caudate nucleus, corpus callosum, hippocampus, hypothalamus, substantia nigra, subthalamic nucleus and thalamus.

It localises to the cytoplasm. Its function is as follows. Involved in EGFR trafficking, acting as negative regulator of endocytic EGFR internalization at the plasma membrane. This is Ataxin-2 (ATXN2) from Homo sapiens (Human).